The chain runs to 290 residues: Phosphatidylglycerol--prolipoprotein diacylglyceryl transferase (290 aa).

Helical transmembrane passes span V21 to A41, L60 to Y80, W96 to F116, F124 to L144, S199 to I219, G226 to F246, and V259 to I279. Residue R143 coordinates a 1,2-diacyl-sn-glycero-3-phospho-(1'-sn-glycerol).

It belongs to the Lgt family.

The protein resides in the cell inner membrane. The enzyme catalyses L-cysteinyl-[prolipoprotein] + a 1,2-diacyl-sn-glycero-3-phospho-(1'-sn-glycerol) = an S-1,2-diacyl-sn-glyceryl-L-cysteinyl-[prolipoprotein] + sn-glycerol 1-phosphate + H(+). The protein operates within protein modification; lipoprotein biosynthesis (diacylglyceryl transfer). Its function is as follows. Catalyzes the transfer of the diacylglyceryl group from phosphatidylglycerol to the sulfhydryl group of the N-terminal cysteine of a prolipoprotein, the first step in the formation of mature lipoproteins. The chain is Phosphatidylglycerol--prolipoprotein diacylglyceryl transferase from Yersinia enterocolitica serotype O:8 / biotype 1B (strain NCTC 13174 / 8081).